Reading from the N-terminus, the 287-residue chain is Undecaprenyl-diphosphatase (287 aa).

The next 7 helical transmembrane spans lie at 6–26, 45–65, 85–105, 111–131, 204–224, 238–258, and 265–285; these read LYLI…FIPV, SGKV…MWIF, AFTR…AIFI, VFYH…IMLW, ATEF…TYDL, AIAV…RAVL, and TYRG…AWLM.

The protein belongs to the UppP family.

The protein resides in the cell inner membrane. It carries out the reaction di-trans,octa-cis-undecaprenyl diphosphate + H2O = di-trans,octa-cis-undecaprenyl phosphate + phosphate + H(+). In terms of biological role, catalyzes the dephosphorylation of undecaprenyl diphosphate (UPP). Confers resistance to bacitracin. This Bordetella petrii (strain ATCC BAA-461 / DSM 12804 / CCUG 43448) protein is Undecaprenyl-diphosphatase.